We begin with the raw amino-acid sequence, 632 residues long: Arginine--tRNA ligase (632 aa).

The short motif at 120-130 (ANPIHPLHIGH) is the 'HIGH' region element.

This sequence belongs to the class-I aminoacyl-tRNA synthetase family.

It localises to the cytoplasm. The catalysed reaction is tRNA(Arg) + L-arginine + ATP = L-arginyl-tRNA(Arg) + AMP + diphosphate. In Pyrobaculum islandicum (strain DSM 4184 / JCM 9189 / GEO3), this protein is Arginine--tRNA ligase.